Reading from the N-terminus, the 209-residue chain is Potassium-transporting ATPase KdpC subunit (209 aa).

The helical transmembrane segment at 10-30 threads the bilayer; the sequence is VISLVFLFVLGFLFPTVTSLI.

This sequence belongs to the KdpC family. In terms of assembly, the system is composed of three essential subunits: KdpA, KdpB and KdpC.

The protein localises to the cell membrane. In terms of biological role, part of the high-affinity ATP-driven potassium transport (or Kdp) system, which catalyzes the hydrolysis of ATP coupled with the electrogenic transport of potassium into the cytoplasm. This subunit acts as a catalytic chaperone that increases the ATP-binding affinity of the ATP-hydrolyzing subunit KdpB by the formation of a transient KdpB/KdpC/ATP ternary complex. This Thermoplasma volcanium (strain ATCC 51530 / DSM 4299 / JCM 9571 / NBRC 15438 / GSS1) protein is Potassium-transporting ATPase KdpC subunit.